The chain runs to 297 residues: Transcriptional regulator protein Pur-beta (297 aa).

Disordered stretches follow at residues 1 to 26 and 275 to 297; these read MADG…EQET and QERH…VDDD. Alanine 2 carries the N-acetylalanine modification. A DNA-binding region spans residues 23–246; the sequence is EQETQELASK…LRVSEVKPSY (224 aa). The segment covering 275–288 has biased composition (basic and acidic residues); it reads QERHRDKMYERREE.

The protein belongs to the PUR DNA-binding protein family.

The protein resides in the nucleus. Transcriptional regulator which can act as an activator or a repressor. This chain is Transcriptional regulator protein Pur-beta (purb), found in Danio rerio (Zebrafish).